The chain runs to 159 residues: 6,7-dimethyl-8-ribityllumazine synthase (159 aa).

5-amino-6-(D-ribitylamino)uracil is bound by residues Trp-28, 59 to 61, and 81 to 83; these read ALE and CVI. (2S)-2-hydroxy-3-oxobutyl phosphate is bound at residue 86–87; the sequence is GT. The Proton donor role is filled by His-89. Asn-114 lines the 5-amino-6-(D-ribitylamino)uracil pocket. (2S)-2-hydroxy-3-oxobutyl phosphate is bound at residue Arg-128.

This sequence belongs to the DMRL synthase family.

The catalysed reaction is (2S)-2-hydroxy-3-oxobutyl phosphate + 5-amino-6-(D-ribitylamino)uracil = 6,7-dimethyl-8-(1-D-ribityl)lumazine + phosphate + 2 H2O + H(+). It functions in the pathway cofactor biosynthesis; riboflavin biosynthesis; riboflavin from 2-hydroxy-3-oxobutyl phosphate and 5-amino-6-(D-ribitylamino)uracil: step 1/2. In terms of biological role, catalyzes the formation of 6,7-dimethyl-8-ribityllumazine by condensation of 5-amino-6-(D-ribitylamino)uracil with 3,4-dihydroxy-2-butanone 4-phosphate. This is the penultimate step in the biosynthesis of riboflavin. This is 6,7-dimethyl-8-ribityllumazine synthase from Corynebacterium kroppenstedtii (strain DSM 44385 / JCM 11950 / CIP 105744 / CCUG 35717).